Reading from the N-terminus, the 252-residue chain is 2-succinyl-6-hydroxy-2,4-cyclohexadiene-1-carboxylate synthase (252 aa).

The protein belongs to the AB hydrolase superfamily. MenH family. As to quaternary structure, monomer.

The catalysed reaction is 5-enolpyruvoyl-6-hydroxy-2-succinyl-cyclohex-3-ene-1-carboxylate = (1R,6R)-6-hydroxy-2-succinyl-cyclohexa-2,4-diene-1-carboxylate + pyruvate. It participates in quinol/quinone metabolism; 1,4-dihydroxy-2-naphthoate biosynthesis; 1,4-dihydroxy-2-naphthoate from chorismate: step 3/7. It functions in the pathway quinol/quinone metabolism; menaquinone biosynthesis. Catalyzes a proton abstraction reaction that results in 2,5-elimination of pyruvate from 2-succinyl-5-enolpyruvyl-6-hydroxy-3-cyclohexene-1-carboxylate (SEPHCHC) and the formation of 2-succinyl-6-hydroxy-2,4-cyclohexadiene-1-carboxylate (SHCHC). This is 2-succinyl-6-hydroxy-2,4-cyclohexadiene-1-carboxylate synthase from Escherichia coli O8 (strain IAI1).